The sequence spans 315 residues: Histone-lysine N-methyltransferase SETMAR (315 aa).

The region spanning 74–137 (PGCACIKTPC…HCRNRVVQSG (64 aa)) is the Pre-SET domain. 9 residues coordinate Zn(2+): cysteine 76, cysteine 78, cysteine 83, cysteine 88, cysteine 90, cysteine 119, cysteine 123, cysteine 125, and cysteine 129. Residues 140 to 264 (FLLQVFQTEK…PGEELSYDYS (125 aa)) enclose the SET domain. Residues 150–152 (KGW), tyrosine 193, arginine 221, and 224–225 (NH) each bind S-adenosyl-L-methionine. 4 residues coordinate Zn(2+): cysteine 227, cysteine 288, cysteine 290, and cysteine 295. In terms of domain architecture, Post-SET spans 284 to 300 (PRKPCYCGAQSCATFLP).

This sequence belongs to the class V-like SAM-binding methyltransferase superfamily.

It is found in the nucleus. The protein resides in the chromosome. It carries out the reaction L-lysyl(36)-[histone H3] + 2 S-adenosyl-L-methionine = N(6),N(6)-dimethyl-L-lysyl(36)-[histone H3] + 2 S-adenosyl-L-homocysteine + 2 H(+). Its function is as follows. Histone methyltransferase that methylates 'Lys-4' and 'Lys-36' of histone H3, 2 specific tags for epigenetic transcriptional activation. Specifically mediates dimethylation of H3 'Lys-36'. This Rattus norvegicus (Rat) protein is Histone-lysine N-methyltransferase SETMAR.